A 262-amino-acid chain; its full sequence is MKNKFGKESRLYIRAKVSDGKTCLQDSYFTAPFKIAKPFYEGHGGFMNLMVMSASAGVMEGDNYRIEVELDKGARVKLEGQSYQKIHRMKNGTAVQYNSFTLADGAFLDYAPNPTIPFADSAFYSNTECRMEEGSAFIYSEILAAGRVKSGEIFRFREYHSGIKIYYGGELIFLENQFLFPKVQNLEGIGFFEGFTHQASMGFFCKQISDELIDKLCVMLTAMEDVQFGLSKTKKYGFVVRILGNSSDRLESILKLIRNILY.

Belongs to the UreD family. As to quaternary structure, ureD, UreF and UreG form a complex that acts as a GTP-hydrolysis-dependent molecular chaperone, activating the urease apoprotein by helping to assemble the nickel containing metallocenter of UreC. The UreE protein probably delivers the nickel.

It is found in the cytoplasm. Required for maturation of urease via the functional incorporation of the urease nickel metallocenter. This Acetivibrio thermocellus (strain ATCC 27405 / DSM 1237 / JCM 9322 / NBRC 103400 / NCIMB 10682 / NRRL B-4536 / VPI 7372) (Clostridium thermocellum) protein is Urease accessory protein UreD.